The following is a 182-amino-acid chain: UPF0397 protein llmg_0343 (182 aa).

5 consecutive transmembrane segments (helical) span residues 8-28 (IVVA…LINI), 42-62 (AVLA…IGFI), 74-94 (APWW…GFGV), 114-134 (IVQF…GDIL), and 146-166 (QGVV…TLLL).

The protein belongs to the UPF0397 family.

It is found in the cell membrane. The protein is UPF0397 protein llmg_0343 of Lactococcus lactis subsp. cremoris (strain MG1363).